The sequence spans 136 residues: Histone H3.3 type c (136 aa).

A disordered region spans residues 1–30 (MARTKQTARKSTGAKVPRKHLSSKSSFPSK). The residue at position 5 (K5) is an N6,N6,N6-trimethyllysine; by set1; alternate. K5 carries the post-translational modification N6,N6-dimethyllysine; by set1; alternate. Residues K5 and K10 each carry the N6-acetyllysine; alternate modification. K5 bears the N6-methyllysine; by set1; alternate mark. Position 10 is an N6,N6,N6-trimethyllysine; alternate (K10). At K10 the chain carries N6,N6-dimethyllysine; alternate. An N6-methyllysine; alternate modification is found at K10. Position 11 is a phosphoserine (S11). The residue at position 15 (K15) is an N6-acetyllysine. An N6-acetyllysine; alternate mark is found at K19, K24, and K37. K19, K24, and K37 each carry N6-methyllysine; alternate. K37 is modified (N6,N6,N6-trimethyllysine; alternate). An N6,N6-dimethyllysine; alternate modification is found at K37. Position 57 is an N6-acetyllysine (K57). Residue K80 is modified to N6,N6,N6-trimethyllysine; alternate. The residue at position 80 (K80) is an N6,N6-dimethyllysine; alternate. K80 bears the N6-methyllysine; alternate mark.

Belongs to the histone H3 family. The nucleosome is a histone octamer containing two molecules each of H2A, H2B, H3 and H4 assembled in one H3-H4 heterotetramer and two H2A-H2B heterodimers. The octamer wraps approximately 147 bp of DNA. Post-translationally, acetylation is generally linked to gene activation. In terms of processing, different methylation states of H3K4 mark distinct developmental phases. H3K4me2 is associated with euchromatic regions. H3K4me3 is a mark of active chromatin. set1 is responsible for all mono-, di- and tri-methylation of H3K4. H3K4me facilitates subsequent acetylation of H3 and H4. Methylation at H3K9 is linked to gene repression. H3S10ph, which is linked to gene activation, prevents methylation at H3K9 but facilitates acetylation of H3 and H4.

It is found in the nucleus. The protein localises to the chromosome. In terms of biological role, core component of nucleosome. Nucleosomes wrap and compact DNA into chromatin, limiting DNA accessibility to the cellular machineries which require DNA as a template. Histones thereby play a central role in transcription regulation, DNA repair, DNA replication and chromosomal stability. DNA accessibility is regulated via a complex set of post-translational modifications of histones, also called histone code, and nucleosome remodeling. In Dictyostelium discoideum (Social amoeba), this protein is Histone H3.3 type c (H3c).